The primary structure comprises 300 residues: MKIDLTRLVTESRNPASEQIDTLPTLDMLKVINQQDQLVALAVAQTLPQVAQAVEAIATAFAQGGRLIYMGAGTSGRLGILDASECPPTYGSQPEQVIGLIAGGHTAILKAVENAEDNRELGQSDLKALHLSEKDVLVGIAASGRTPYVIAGMEYARSVGATVVSLACNPGCPMEAYADIVITPVVGAEVVTGSSRMKAGTAQKLVLNMLTTGAMIKSGKVFGNLMVDVEATNAKLIQRQTNIVVEATGVSAEQAEAALAACGRHCKTAILMILGGFSAEQAAQKLTQHQGFIRAALNQE.

An SIS domain is found at 57 to 220 (IATAFAQGGR…TTGAMIKSGK (164 aa)). The active-site Proton donor is Glu-85. Glu-116 is an active-site residue.

The protein belongs to the GCKR-like family. MurNAc-6-P etherase subfamily. Homodimer.

The enzyme catalyses N-acetyl-D-muramate 6-phosphate + H2O = N-acetyl-D-glucosamine 6-phosphate + (R)-lactate. It participates in amino-sugar metabolism; 1,6-anhydro-N-acetylmuramate degradation. The protein operates within amino-sugar metabolism; N-acetylmuramate degradation. It functions in the pathway cell wall biogenesis; peptidoglycan recycling. Specifically catalyzes the cleavage of the D-lactyl ether substituent of MurNAc 6-phosphate, producing GlcNAc 6-phosphate and D-lactate. Together with AnmK, is also required for the utilization of anhydro-N-acetylmuramic acid (anhMurNAc) either imported from the medium or derived from its own cell wall murein, and thus plays a role in cell wall recycling. This Vibrio cholerae serotype O1 (strain ATCC 39315 / El Tor Inaba N16961) protein is N-acetylmuramic acid 6-phosphate etherase 1.